A 518-amino-acid chain; its full sequence is Flagellin (518 aa).

It belongs to the bacterial flagellin family.

Its subcellular location is the secreted. It localises to the bacterial flagellum. Flagellin is the subunit protein which polymerizes to form the filaments of bacterial flagella. This Aquifex aeolicus (strain VF5) protein is Flagellin (flaA).